Here is a 405-residue protein sequence, read N- to C-terminus: Cytochrome P450 107B1 (405 aa).

Heme is bound at residue C352.

The protein belongs to the cytochrome P450 family. The cofactor is heme.

It is found in the cytoplasm. Its function is as follows. Not known, probably involved in the catabolism of octane and guaiacol. It displays a weak activity in the O-dealkylation of 7-ethoxycoumarin. This chain is Cytochrome P450 107B1 (cyp107B1), found in Saccharopolyspora erythraea (strain ATCC 11635 / DSM 40517 / JCM 4748 / NBRC 13426 / NCIMB 8594 / NRRL 2338).